Consider the following 192-residue polypeptide: MSKPSDRINLTNQFLIAMPNMADPTFSGTVVYLCDHSERGALGLVINRPTDIDLESLFNRIDLKLDIEPLLHIPVYFGGPVQTERGFVLHEPVEGASYNSSMSVDGGLEMTTSKDVLEAVATGTGPKRFLLTLGHAGWGAGQLEEEISRNGWLTVAADPRIVFDTPAEERFEAALGLLGVSSSMLSGEAGHA.

The protein belongs to the UPF0301 (AlgH) family.

In Burkholderia cenocepacia (strain ATCC BAA-245 / DSM 16553 / LMG 16656 / NCTC 13227 / J2315 / CF5610) (Burkholderia cepacia (strain J2315)), this protein is UPF0301 protein BceJ2315_30870.